Here is a 335-residue protein sequence, read N- to C-terminus: tRNA-dihydrouridine(20/20a) synthase (335 aa).

FMN is bound by residues P20 to L22 and Q72. C102 functions as the Proton donor in the catalytic mechanism. FMN contacts are provided by residues K141, H173, N213–G215, and G235–R236.

Belongs to the Dus family. DusA subfamily. FMN serves as cofactor.

The catalysed reaction is 5,6-dihydrouridine(20) in tRNA + NADP(+) = uridine(20) in tRNA + NADPH + H(+). It catalyses the reaction 5,6-dihydrouridine(20) in tRNA + NAD(+) = uridine(20) in tRNA + NADH + H(+). The enzyme catalyses 5,6-dihydrouridine(20a) in tRNA + NADP(+) = uridine(20a) in tRNA + NADPH + H(+). It carries out the reaction 5,6-dihydrouridine(20a) in tRNA + NAD(+) = uridine(20a) in tRNA + NADH + H(+). In terms of biological role, catalyzes the synthesis of 5,6-dihydrouridine (D), a modified base found in the D-loop of most tRNAs, via the reduction of the C5-C6 double bond in target uridines. Specifically modifies U20 and U20a in tRNAs. The chain is tRNA-dihydrouridine(20/20a) synthase from Shewanella oneidensis (strain ATCC 700550 / JCM 31522 / CIP 106686 / LMG 19005 / NCIMB 14063 / MR-1).